Consider the following 267-residue polypeptide: Phosphonoacetaldehyde hydrolase (267 aa).

The active-site Nucleophile is the D10. The Mg(2+) site is built by D10 and A12. K51 serves as the catalytic Schiff-base intermediate with substrate. Residue D184 participates in Mg(2+) binding.

The protein belongs to the HAD-like hydrolase superfamily. PhnX family. As to quaternary structure, homodimer. Requires Mg(2+) as cofactor.

It carries out the reaction phosphonoacetaldehyde + H2O = acetaldehyde + phosphate + H(+). In terms of biological role, involved in phosphonate degradation. The chain is Phosphonoacetaldehyde hydrolase from Paraburkholderia xenovorans (strain LB400).